We begin with the raw amino-acid sequence, 393 residues long: MRGLGLMSGTSADGVDAAVLDLAVAGCGGYRGVFTHAFEPALRTEVLAANGPLGVEAMAQLDRRLGACYARVAREAVDRLGPVDFIALHGQTIRHQPRGEPGFTLQIGAAADIAVATGLTVVHDFRRTDVAAGGEGAPLVPPFHQYCFQDEQPRLVLNLGGMANVTWLPGTGDPRPLLAFDCGPGNVLMDAAVELCSAGQATCDVDGRLAAAGQCDVVRLEEWLDHVFFRQAPPKSTGRETFGMPLVTRWWSSWRGSAADFLATLTALTAESVARAVRAWTPGAAEMLVFGGGAENQALMQALQDAMKETRVLHGGRHSGIPGQALEALAFAWLGSQCLLGKRLDLERVTGAQHPMILGNILPGDNWPDLLVQLSQQPEITAREGPYRALRSV.

Residue 9-16 coordinates ATP; the sequence is GTSADGVD.

It belongs to the anhydro-N-acetylmuramic acid kinase family.

It carries out the reaction 1,6-anhydro-N-acetyl-beta-muramate + ATP + H2O = N-acetyl-D-muramate 6-phosphate + ADP + H(+). It participates in amino-sugar metabolism; 1,6-anhydro-N-acetylmuramate degradation. The protein operates within cell wall biogenesis; peptidoglycan recycling. Catalyzes the specific phosphorylation of 1,6-anhydro-N-acetylmuramic acid (anhMurNAc) with the simultaneous cleavage of the 1,6-anhydro ring, generating MurNAc-6-P. Is required for the utilization of anhMurNAc either imported from the medium or derived from its own cell wall murein, and thus plays a role in cell wall recycling. The polypeptide is Anhydro-N-acetylmuramic acid kinase (Acidithiobacillus ferrooxidans (strain ATCC 23270 / DSM 14882 / CIP 104768 / NCIMB 8455) (Ferrobacillus ferrooxidans (strain ATCC 23270))).